A 505-amino-acid polypeptide reads, in one-letter code: Zealexin A1 synthase (505 aa).

Residues 7 to 26 (IAVGTVAVVAVLSKLKSAVT) form a helical membrane-spanning segment. Cys442 provides a ligand contact to heme.

This sequence belongs to the cytochrome P450 family. Requires heme as cofactor.

The protein resides in the membrane. The enzyme catalyses (S)-beta-macrocarpene + 3 reduced [NADPH--hemoprotein reductase] + 3 O2 = zealexin A1 + 3 oxidized [NADPH--hemoprotein reductase] + 4 H2O + 4 H(+). In terms of biological role, involved in production of the antifungal phytoalexin zealexin A1. The enzyme sequentially oxidizes(S)-beta-macrocarpene via alcohol and aldehyde intermediates to form zealexin A1, a maize phytoalexin that provides biochemical protection against fungal infection. The polypeptide is Zealexin A1 synthase (Zea mays (Maize)).